Here is a 118-residue protein sequence, read N- to C-terminus: Small ribosomal subunit protein uS13 (118 aa).

A disordered region spans residues 94 to 118; sequence SLPLRGQRTKTNARTRKGPRKPIKK.

This sequence belongs to the universal ribosomal protein uS13 family. As to quaternary structure, part of the 30S ribosomal subunit. Forms a loose heterodimer with protein S19. Forms two bridges to the 50S subunit in the 70S ribosome.

Located at the top of the head of the 30S subunit, it contacts several helices of the 16S rRNA. In the 70S ribosome it contacts the 23S rRNA (bridge B1a) and protein L5 of the 50S subunit (bridge B1b), connecting the 2 subunits; these bridges are implicated in subunit movement. Contacts the tRNAs in the A and P-sites. In Aliivibrio fischeri (strain ATCC 700601 / ES114) (Vibrio fischeri), this protein is Small ribosomal subunit protein uS13.